Reading from the N-terminus, the 217-residue chain is Large ribosomal subunit protein uL3 (217 aa).

Positions 131-155 (FSSSRASHGNSRSHNVPGSIGMAQD) are disordered. Over residues 132–145 (SSSRASHGNSRSHN) the composition is skewed to low complexity. An N5-methylglutamine modification is found at Q154.

The protein belongs to the universal ribosomal protein uL3 family. Part of the 50S ribosomal subunit. Forms a cluster with proteins L14 and L19. Methylated by PrmB.

One of the primary rRNA binding proteins, it binds directly near the 3'-end of the 23S rRNA, where it nucleates assembly of the 50S subunit. The polypeptide is Large ribosomal subunit protein uL3 (Nitrosomonas eutropha (strain DSM 101675 / C91 / Nm57)).